A 125-amino-acid chain; its full sequence is MRIAGVNLPLNKHAVIALTHIYGIGKTSAKNILERVGIDPARKISELNDEEAHSIREVIAEDYIVEGQARGEQQLSVKRLMDIGCYRGLRHRRSLPARGQNTQTNARTRKGRRKTVAGKKKAVKK.

Residues 92 to 125 are disordered; it reads RRSLPARGQNTQTNARTRKGRRKTVAGKKKAVKK. The segment covering 107–125 has biased composition (basic residues); it reads RTRKGRRKTVAGKKKAVKK.

Belongs to the universal ribosomal protein uS13 family. Part of the 30S ribosomal subunit. Forms a loose heterodimer with protein S19. Forms two bridges to the 50S subunit in the 70S ribosome.

In terms of biological role, located at the top of the head of the 30S subunit, it contacts several helices of the 16S rRNA. In the 70S ribosome it contacts the 23S rRNA (bridge B1a) and protein L5 of the 50S subunit (bridge B1b), connecting the 2 subunits; these bridges are implicated in subunit movement. Contacts the tRNAs in the A and P-sites. This is Small ribosomal subunit protein uS13 from Chlorobium phaeobacteroides (strain BS1).